Consider the following 173-residue polypeptide: MGKIIFYEDRNFQGRNYECSSDCADLSPYFSRCNSIRVESDWWVLYEKPNYMGYQHVLTRGEYPDYQRWMGFNDCVRSCRVPTHTQRPYRMRIYERPDFGGQMMEFMDVCPSVYDRFRYRDIHSSHVMGAYWIFYEHPNYRGRLYFMRPGEYRRYSDWGGYSSTIGSFRRIME.

Beta/gamma crystallin 'Greek key' domains are found at residues 2-40 and 41-83; these read GKIIFYEDRNFQGRNYECSSDCADLSPYFSRCNSIRVES and DWWV…RVPT. Residues 84–88 form a connecting peptide region; the sequence is HTQRP. Beta/gamma crystallin 'Greek key' domains lie at 89-129 and 130-172; these read YRMR…HVMG and AYWI…RRIM.

Belongs to the beta/gamma-crystallin family.

Its function is as follows. Crystallins are the dominant structural components of the vertebrate eye lens. The protein is Gamma-crystallin S-2 (GS-2) of Chiloscyllium indicum (Slender bamboo shark).